A 102-amino-acid polypeptide reads, in one-letter code: Large ribosomal subunit protein uL24 (102 aa).

Belongs to the universal ribosomal protein uL24 family. Part of the 50S ribosomal subunit.

Its function is as follows. One of two assembly initiator proteins, it binds directly to the 5'-end of the 23S rRNA, where it nucleates assembly of the 50S subunit. Functionally, one of the proteins that surrounds the polypeptide exit tunnel on the outside of the subunit. This Rhizobium johnstonii (strain DSM 114642 / LMG 32736 / 3841) (Rhizobium leguminosarum bv. viciae) protein is Large ribosomal subunit protein uL24.